The primary structure comprises 173 residues: Crossover junction endodeoxyribonuclease RuvC (173 aa).

Catalysis depends on residues aspartate 8, glutamate 67, and aspartate 139. 3 residues coordinate Mg(2+): aspartate 8, glutamate 67, and aspartate 139.

This sequence belongs to the RuvC family. Homodimer which binds Holliday junction (HJ) DNA. The HJ becomes 2-fold symmetrical on binding to RuvC with unstacked arms; it has a different conformation from HJ DNA in complex with RuvA. In the full resolvosome a probable DNA-RuvA(4)-RuvB(12)-RuvC(2) complex forms which resolves the HJ. Mg(2+) is required as a cofactor.

The protein localises to the cytoplasm. The enzyme catalyses Endonucleolytic cleavage at a junction such as a reciprocal single-stranded crossover between two homologous DNA duplexes (Holliday junction).. In terms of biological role, the RuvA-RuvB-RuvC complex processes Holliday junction (HJ) DNA during genetic recombination and DNA repair. Endonuclease that resolves HJ intermediates. Cleaves cruciform DNA by making single-stranded nicks across the HJ at symmetrical positions within the homologous arms, yielding a 5'-phosphate and a 3'-hydroxyl group; requires a central core of homology in the junction. The consensus cleavage sequence is 5'-(A/T)TT(C/G)-3'. Cleavage occurs on the 3'-side of the TT dinucleotide at the point of strand exchange. HJ branch migration catalyzed by RuvA-RuvB allows RuvC to scan DNA until it finds its consensus sequence, where it cleaves and resolves the cruciform DNA. In Cronobacter sakazakii (strain ATCC BAA-894) (Enterobacter sakazakii), this protein is Crossover junction endodeoxyribonuclease RuvC.